Reading from the N-terminus, the 308-residue chain is tRNA dimethylallyltransferase (308 aa).

An ATP-binding site is contributed by 14–21 (GPTASGKT). Position 16–21 (16–21 (TASGKT)) interacts with substrate. Interaction with substrate tRNA regions lie at residues 39–42 (DSAL), 163–167 (QRLAR), and 244–249 (RCVGYR).

The protein belongs to the IPP transferase family. Monomer. Requires Mg(2+) as cofactor.

The enzyme catalyses adenosine(37) in tRNA + dimethylallyl diphosphate = N(6)-dimethylallyladenosine(37) in tRNA + diphosphate. In terms of biological role, catalyzes the transfer of a dimethylallyl group onto the adenine at position 37 in tRNAs that read codons beginning with uridine, leading to the formation of N6-(dimethylallyl)adenosine (i(6)A). The polypeptide is tRNA dimethylallyltransferase (Shewanella halifaxensis (strain HAW-EB4)).